Consider the following 977-residue polypeptide: Short transient receptor potential channel 4 (977 aa).

Topologically, residues 1 to 324 (MAQFYYKRNV…YDEFPGWRRR (324 aa)) are cytoplasmic. ANK repeat units follow at residues 29-60 (LSPSEKAYLNAVEKGDYASVKKSLEEAEIYFK), 71-93 (RTALLIAIENENLELIELLLSFN), 96-118 (VGDALLHAIRKEVVGAVELLLNH), and 141-165 (PDITPIILAAHTNNYEIIKLLVQKG). Positions 172, 176, 178, and 181 each coordinate Zn(2+). Residues 223-260 (LSWELQELSKVENEFKSEYEELSRQCKQFAKDLLDQTR) adopt a coiled-coil conformation. The segment at residues 325–359 (HWAVKMVTCFIIGLLFPVFSVCYLIAPKSPLGLFI) is an intramembrane region (discontinuously helical). Over 360–362 (RKP) the chain is Cytoplasmic. A helical transmembrane segment spans residues 363-383 (FIKFICHTASYLTFLFLLLLA). Residues 384 to 403 (SQHIDRSDLNRQGPPPTIVE) are Extracellular-facing. Residues 404–418 (WMILPWVLGFIWGEI) traverse the membrane as a helical segment. Residues glutamate 417, glutamine 420, asparagine 435, and aspartate 438 each coordinate Ca(2+). At 419-432 (KQMWDGGLQDYIHD) the chain is on the cytoplasmic side. A helical transmembrane segment spans residues 433-453 (WWNLMDFVMNSLYLATISLKI). Residues 454–475 (VAFVKYSALNPRESWDMWHPTL) are Extracellular-facing. Residues 476–498 (VAEALFAIANIFSSLRLISLFTA) form a helical membrane-spanning segment. The Cytoplasmic segment spans residues 499–511 (NSHLGPLQISLGR). Residues 512–534 (MLLDILKFLFIYCLVLLAFANGL) traverse the membrane as a helical segment. Topologically, residues 535–599 (NQLYFYYEET…HEFTDFVGAT (65 aa)) are extracellular. Cysteine 549 and cysteine 554 are disulfide-bonded. The helical transmembrane segment at 600 to 620 (MFGTYNVISLVVLLNMLIAMM) threads the bilayer. An interaction with ITPR1, ITPR2 and ITPR3 region spans residues 615 to 977 (MLIAMMNNSY…AHEDYVTTRL (363 aa)). Over 621-977 (NNSYQLIADH…AHEDYVTTRL (357 aa)) the chain is Cytoplasmic. The interval 767 to 790 (AASSASSADSDEKSHSEGNGKDKR) is disordered. The segment covering 776 to 787 (SDEKSHSEGNGK) has biased composition (basic and acidic residues). A phosphotyrosine; by FYN mark is found at tyrosine 959 and tyrosine 972. Residues 975–977 (TRL) form a PDZ-binding domain region.

The protein belongs to the transient receptor (TC 1.A.4) family. STrpC subfamily. TRPC4 sub-subfamily. In terms of assembly, homotetramer. Heterotetramer with TRPC1 and/or TRPC5. Forms a heteromeric ion channel with TRPC1, with a 1:3 TRPC1:TRPC4 stoichiometry. Interacts with TRPC4AP. Isoform alpha but not isoform beta interacts with ITPR1, ITPR2 and ITPR3. Interacts with NHERF1. Interacts with MX1 and RNF24. Interacts (via CIRB domain) with SESTD1 (via the spectrin 1 repeat) and SPTBN5 (via C-terminus). Interacts with CDH5 and CTNNB1. Interacts (via protein 4.1-binding domain) with EPB41L2. Interacts with PLSCR1.

The protein localises to the cell membrane. The enzyme catalyses Ca(2+)(in) = Ca(2+)(out). It catalyses the reaction Na(+)(in) = Na(+)(out). The catalysed reaction is Li(+)(in) = Li(+)(out). It carries out the reaction Cs(+)(in) = Cs(+)(out). May be operated by a phosphatidylinositol second messenger system activated by receptor tyrosine kinases or G-protein coupled receptors. May be activated by intracellular calcium store depletion. Forms a receptor-activated non-selective calcium permeant cation channel. Acts as a cell-cell contact-dependent endothelial calcium entry channel. Forms a homomeric ion channel or a heteromeric ion channel with TRPC1; the heteromeric ion channel has reduced calcium permeability compared to the homomeric channel. Also permeable to monovalent ions including sodium, lithium and cesium ions. Its function is as follows. Forms a non-selective a receptor-activated calcium permeant cation channel. Probably is operated by a phosphatidylinositol second messenger system activated by receptor tyrosine kinases or G-protein coupled receptors. In Rattus norvegicus (Rat), this protein is Short transient receptor potential channel 4 (Trpc4).